The primary structure comprises 201 residues: UPF0098 protein MT1961 (201 aa).

A disordered region spans residues 125–146; it reads TADGETPGGGISLPNSSGQPAY.

It belongs to the UPF0098 family.

The protein is UPF0098 protein MT1961 of Mycobacterium tuberculosis (strain CDC 1551 / Oshkosh).